A 170-amino-acid polypeptide reads, in one-letter code: Der GTPase-activating protein YihI (170 aa).

Disordered stretches follow at residues 1 to 96 (MKKP…LSPQ) and 145 to 170 (LSYDDEEDEEEDEKQEDMMRLLRGGN). Residues 20–30 (TREELNQEARD) show a composition bias toward basic and acidic residues. A compositionally biased stretch (basic residues) spans 31-40 (RKRLKKHRGH). Residues 147–159 (YDDEEDEEEDEKQ) show a composition bias toward acidic residues.

This sequence belongs to the YihI family. In terms of assembly, interacts with Der.

Functionally, a GTPase-activating protein (GAP) that modifies Der/EngA GTPase function. May play a role in ribosome biogenesis. This is Der GTPase-activating protein YihI from Salmonella arizonae (strain ATCC BAA-731 / CDC346-86 / RSK2980).